The following is a 158-amino-acid chain: UPF0145 protein Psyc_1853 (158 aa).

Residues 113-122 (IYQSSNQPPS) show a composition bias toward polar residues. The interval 113 to 158 (IYQSSNQPPSHHSGHSQYEEPVPSAAQPSTTAQANDDLPRFNPFGE) is disordered.

The protein belongs to the UPF0145 family.

This is UPF0145 protein Psyc_1853 from Psychrobacter arcticus (strain DSM 17307 / VKM B-2377 / 273-4).